The following is a 124-amino-acid chain: Large ribosomal subunit protein bL12 (124 aa).

Belongs to the bacterial ribosomal protein bL12 family. As to quaternary structure, homodimer. Part of the ribosomal stalk of the 50S ribosomal subunit. Forms a multimeric L10(L12)X complex, where L10 forms an elongated spine to which 2 to 4 L12 dimers bind in a sequential fashion. Binds GTP-bound translation factors.

Functionally, forms part of the ribosomal stalk which helps the ribosome interact with GTP-bound translation factors. Is thus essential for accurate translation. In Cupriavidus pinatubonensis (strain JMP 134 / LMG 1197) (Cupriavidus necator (strain JMP 134)), this protein is Large ribosomal subunit protein bL12.